Reading from the N-terminus, the 312-residue chain is DNA-directed RNA polymerase subunit alpha (312 aa).

The interval 1 to 229 is alpha N-terminal domain (alpha-NTD); the sequence is MLQYQIDRID…ELFQPLATVT (229 aa). Positions 246–312 are alpha C-terminal domain (alpha-CTD); sequence IPLEELNLSV…ISIPQSRTSV (67 aa).

The protein belongs to the RNA polymerase alpha chain family. As to quaternary structure, in cyanobacteria the RNAP catalytic core is composed of 2 alpha, 1 beta, 1 beta', 1 gamma and 1 omega subunit. When a sigma factor is associated with the core the holoenzyme is formed, which can initiate transcription.

The catalysed reaction is RNA(n) + a ribonucleoside 5'-triphosphate = RNA(n+1) + diphosphate. In terms of biological role, DNA-dependent RNA polymerase catalyzes the transcription of DNA into RNA using the four ribonucleoside triphosphates as substrates. The protein is DNA-directed RNA polymerase subunit alpha of Prochlorococcus marinus subsp. pastoris (strain CCMP1986 / NIES-2087 / MED4).